Here is a 209-residue protein sequence, read N- to C-terminus: Ubiquitin-conjugating enzyme E2 S (209 aa).

The 147-residue stretch at 14-160 (QTIRQVMREL…ARMMTEIHAQ (147 aa)) folds into the UBC core domain. C98 serves as the catalytic Glycyl thioester intermediate. The interval 165–194 (GVGAASDAKDDDGPSTKKHAGLDKKLQDKK) is disordered. Positions 171–194 (DAKDDDGPSTKKHAGLDKKLQDKK) are enriched in basic and acidic residues.

This sequence belongs to the ubiquitin-conjugating enzyme family.

It carries out the reaction S-ubiquitinyl-[E1 ubiquitin-activating enzyme]-L-cysteine + [E2 ubiquitin-conjugating enzyme]-L-cysteine = [E1 ubiquitin-activating enzyme]-L-cysteine + S-ubiquitinyl-[E2 ubiquitin-conjugating enzyme]-L-cysteine.. The protein operates within protein modification; protein ubiquitination. Catalyzes the covalent attachment of ubiquitin to other proteins. Acts as an essential factor of the anaphase promoting complex/cyclosome (APC/C), a cell cycle-regulated ubiquitin ligase that controls progression through mitosis. Acts by specifically elongating polyubiquitin chains initiated by the E2 enzyme vih/UbcH10 on APC/C substrates, enhancing the degradation of APC/C substrates by the proteasome and promoting mitotic exit. In Drosophila persimilis (Fruit fly), this protein is Ubiquitin-conjugating enzyme E2 S.